The following is a 361-amino-acid chain: Peptide chain release factor 1 (361 aa).

N5-methylglutamine is present on Gln236.

This sequence belongs to the prokaryotic/mitochondrial release factor family. Post-translationally, methylated by PrmC. Methylation increases the termination efficiency of RF1.

The protein localises to the cytoplasm. Its function is as follows. Peptide chain release factor 1 directs the termination of translation in response to the peptide chain termination codons UAG and UAA. In Lactobacillus acidophilus (strain ATCC 700396 / NCK56 / N2 / NCFM), this protein is Peptide chain release factor 1.